The primary structure comprises 400 residues: Ornithine aminotransferase (400 aa).

Lysine 254 is modified (N6-(pyridoxal phosphate)lysine).

The protein belongs to the class-III pyridoxal-phosphate-dependent aminotransferase family. OAT subfamily. Requires pyridoxal 5'-phosphate as cofactor.

The protein localises to the cytoplasm. The catalysed reaction is a 2-oxocarboxylate + L-ornithine = L-glutamate 5-semialdehyde + an L-alpha-amino acid. It participates in amino-acid biosynthesis; L-proline biosynthesis; L-glutamate 5-semialdehyde from L-ornithine: step 1/1. Its function is as follows. Catalyzes the interconversion of ornithine to glutamate semialdehyde. This chain is Ornithine aminotransferase, found in Exiguobacterium sp. (strain ATCC BAA-1283 / AT1b).